A 375-amino-acid polypeptide reads, in one-letter code: Anhydro-N-acetylmuramic acid kinase (375 aa).

Residue 12 to 19 (GTSLDGVD) coordinates ATP.

This sequence belongs to the anhydro-N-acetylmuramic acid kinase family.

It carries out the reaction 1,6-anhydro-N-acetyl-beta-muramate + ATP + H2O = N-acetyl-D-muramate 6-phosphate + ADP + H(+). It participates in amino-sugar metabolism; 1,6-anhydro-N-acetylmuramate degradation. Its pathway is cell wall biogenesis; peptidoglycan recycling. Catalyzes the specific phosphorylation of 1,6-anhydro-N-acetylmuramic acid (anhMurNAc) with the simultaneous cleavage of the 1,6-anhydro ring, generating MurNAc-6-P. Is required for the utilization of anhMurNAc either imported from the medium or derived from its own cell wall murein, and thus plays a role in cell wall recycling. The protein is Anhydro-N-acetylmuramic acid kinase of Mannheimia succiniciproducens (strain KCTC 0769BP / MBEL55E).